Consider the following 199-residue polypeptide: NADH-quinone oxidoreductase subunit C (199 aa).

Belongs to the complex I 30 kDa subunit family. NDH-1 is composed of 14 different subunits. Subunits NuoB, C, D, E, F, and G constitute the peripheral sector of the complex.

The protein resides in the cell membrane. It catalyses the reaction a quinone + NADH + 5 H(+)(in) = a quinol + NAD(+) + 4 H(+)(out). NDH-1 shuttles electrons from NADH, via FMN and iron-sulfur (Fe-S) centers, to quinones in the respiratory chain. The immediate electron acceptor for the enzyme in this species is believed to be ubiquinone. Couples the redox reaction to proton translocation (for every two electrons transferred, four hydrogen ions are translocated across the cytoplasmic membrane), and thus conserves the redox energy in a proton gradient. The chain is NADH-quinone oxidoreductase subunit C from Polynucleobacter asymbioticus (strain DSM 18221 / CIP 109841 / QLW-P1DMWA-1) (Polynucleobacter necessarius subsp. asymbioticus).